The sequence spans 103 residues: Co-chaperonin GroES (103 aa).

It belongs to the GroES chaperonin family. As to quaternary structure, heptamer of 7 subunits arranged in a ring. Interacts with the chaperonin GroEL.

The protein localises to the cytoplasm. Functionally, together with the chaperonin GroEL, plays an essential role in assisting protein folding. The GroEL-GroES system forms a nano-cage that allows encapsulation of the non-native substrate proteins and provides a physical environment optimized to promote and accelerate protein folding. GroES binds to the apical surface of the GroEL ring, thereby capping the opening of the GroEL channel. In Parasynechococcus marenigrum (strain WH8102), this protein is Co-chaperonin GroES.